A 292-amino-acid polypeptide reads, in one-letter code: Phosphatidylglycerol--prolipoprotein diacylglyceryl transferase (292 aa).

3 consecutive transmembrane segments (helical) span residues 18–38 (LFGVTFALRWYALAYIAGLLI), 67–87 (LLTWVILGVILGGRLGFVLFY), and 105–125 (GGMSFHGGFLGVMTALVAFCL). An a 1,2-diacyl-sn-glycero-3-phospho-(1'-sn-glycerol)-binding site is contributed by Arg-150. Transmembrane regions (helical) follow at residues 193-213 (QIYEAGLEGILLFAVLSLLVW), 222-242 (GSVSGMFLAGYGATRFLVEFV), and 266-286 (GLTMGQILSLPMILLGLYLIL).

This sequence belongs to the Lgt family.

It is found in the cell inner membrane. It carries out the reaction L-cysteinyl-[prolipoprotein] + a 1,2-diacyl-sn-glycero-3-phospho-(1'-sn-glycerol) = an S-1,2-diacyl-sn-glyceryl-L-cysteinyl-[prolipoprotein] + sn-glycerol 1-phosphate + H(+). Its pathway is protein modification; lipoprotein biosynthesis (diacylglyceryl transfer). Its function is as follows. Catalyzes the transfer of the diacylglyceryl group from phosphatidylglycerol to the sulfhydryl group of the N-terminal cysteine of a prolipoprotein, the first step in the formation of mature lipoproteins. The sequence is that of Phosphatidylglycerol--prolipoprotein diacylglyceryl transferase from Cereibacter sphaeroides (strain ATCC 17029 / ATH 2.4.9) (Rhodobacter sphaeroides).